Consider the following 159-residue polypeptide: 3-hydroxyacyl-[acyl-carrier-protein] dehydratase FabZ (159 aa).

His59 is an active-site residue.

It belongs to the thioester dehydratase family. FabZ subfamily.

It is found in the cytoplasm. It carries out the reaction a (3R)-hydroxyacyl-[ACP] = a (2E)-enoyl-[ACP] + H2O. In terms of biological role, involved in unsaturated fatty acids biosynthesis. Catalyzes the dehydration of short chain beta-hydroxyacyl-ACPs and long chain saturated and unsaturated beta-hydroxyacyl-ACPs. This chain is 3-hydroxyacyl-[acyl-carrier-protein] dehydratase FabZ, found in Caulobacter vibrioides (strain ATCC 19089 / CIP 103742 / CB 15) (Caulobacter crescentus).